The primary structure comprises 79 residues: Conotoxin ArMSGL-0121 (79 aa).

The first 20 residues, 1–20 (MSRLGIMVLTLLLLVFIVTS), serve as a signal peptide directing secretion. The propeptide occupies 21–44 (HQDAGEKQATQRNAINFRWRRSFT). 3 disulfides stabilise this stretch: Cys-52–Cys-64, Cys-56–Cys-73, and Cys-63–Cys-77. Leu-78 carries the post-translational modification Leucine amide.

Belongs to the conotoxin O3 superfamily. As to expression, expressed by the venom duct.

The protein resides in the secreted. This chain is Conotoxin ArMSGL-0121, found in Conus arenatus (Sand-dusted cone).